Reading from the N-terminus, the 115-residue chain is NADH-ubiquinone oxidoreductase chain 3 (115 aa).

The next 3 membrane-spanning stretches (helical) occupy residues 3 to 23, 55 to 75, and 84 to 104; these read LFVA…VAFW, FFLV…LLPL, and LSAM…GLIY.

This sequence belongs to the complex I subunit 3 family. In terms of assembly, core subunit of respiratory chain NADH dehydrogenase (Complex I) which is composed of 45 different subunits. Interacts with TMEM186. Interacts with TMEM242.

The protein localises to the mitochondrion inner membrane. The catalysed reaction is a ubiquinone + NADH + 5 H(+)(in) = a ubiquinol + NAD(+) + 4 H(+)(out). Its function is as follows. Core subunit of the mitochondrial membrane respiratory chain NADH dehydrogenase (Complex I) which catalyzes electron transfer from NADH through the respiratory chain, using ubiquinone as an electron acceptor. Essential for the catalytic activity of complex I. This chain is NADH-ubiquinone oxidoreductase chain 3, found in Sigmodon hispidus (Hispid cotton rat).